Consider the following 926-residue polypeptide: Alpha-L-rhamnosidase (926 aa).

A signal peptide spans 1–25; the sequence is MILHKSVFKSYIYVLTYFVFFSVMS. Residue Cys26 is the site of N-palmitoyl cysteine attachment. The S-diacylglycerol cysteine moiety is linked to residue Cys26. Alpha-L-rhamnose contacts are provided by residues Asp504, 508–510, Asp517, and Trp569; that span reads RDE. The active-site Proton donor is Glu510. Glu779 functions as the Proton acceptor in the catalytic mechanism. Position 800 (His800) interacts with alpha-L-rhamnose.

Belongs to the glycosyl hydrolase 78 family.

The protein localises to the cell membrane. The catalysed reaction is Hydrolysis of terminal non-reducing alpha-L-rhamnose residues in alpha-L-rhamnosides.. In terms of biological role, alpha-L-rhamnosidase involved in ulvan degradation. Ulvan is the main polysaccharide component of the Ulvales (green seaweed) cell wall. It is composed of disaccharide building blocks comprising 3-sulfated rhamnose (Rha3S) linked to D-glucuronic acid (GlcA), L-iduronic acid (IduA), or D-xylose (Xyl). Alpha-L-rhamnosidase converts Rha-Xyl-Rha3S, the product of a sulfatase acting on Rha3S-Xyl-Rha3S oligosaccharides, to Rha and Xyl-Rha3S. The enzyme is able to degrade p-nitrophenyl-alpha-L-rhamnopyranoside (PNP-Rha) in vitro. This Formosa agariphila (strain DSM 15362 / KCTC 12365 / LMG 23005 / KMM 3901 / M-2Alg 35-1) protein is Alpha-L-rhamnosidase.